The primary structure comprises 269 residues: Proenkephalin-A (269 aa).

Positions 1 to 24 (MAQFLRLCIWLLALGSCLLATVQA) are cleaved as a signal peptide. Disulfide bonds link C26/C48, C30/C52, and C33/C65. Positions 165 to 191 (DNRAKDSHQQESTNNDEDSTSKRYGGF) are disordered. 2 propeptides span residues 198 to 209 (SPQLEDEAKELQ) and 219 to 229 (VGRPEWWMDYQ). S253 is subject to Phosphoserine.

This sequence belongs to the opioid neuropeptide precursor family. Proenkephalin-A is cleaved by CTSL to generate Met-enkephalin. Post-translationally, processed and degraded by ACE. In terms of processing, probably cleaved by ACE. Processed by ACE to generate Met-enkephalin in the nucleus accumbens of the brain. Post-translationally, the N-terminal domain contains 6 conserved cysteines thought to be involved in disulfide bonding and/or processing. Expressed in brain, heart and testis.

Its subcellular location is the secreted. It is found in the cytoplasmic vesicle. The protein localises to the secretory vesicle. The protein resides in the chromaffin granule lumen. Its function is as follows. Neuropeptide that competes with and mimic the effects of opiate drugs. They play a role in a number of physiologic functions, including pain perception and responses to stress. Met-enkephalin-Arg-Phe neuropeptide acts as a strong ligand of Mu-type opioid receptor OPRM1. Met-enkephalin-Arg-Phe-binding to OPRM1 in the nucleus accumbens of the brain increases activation of OPRM1, leading to long-term synaptic depression of glutamate release. Functionally, increases glutamate release in the striatum and decreases GABA concentration in the striatum. In terms of biological role, increases glutamate release in the striatum. The polypeptide is Proenkephalin-A (Penk) (Rattus norvegicus (Rat)).